A 251-amino-acid polypeptide reads, in one-letter code: 1-(5-phosphoribosyl)-5-[(5-phosphoribosylamino)methylideneamino] imidazole-4-carboxamide isomerase (251 aa).

Asp8 functions as the Proton acceptor in the catalytic mechanism. Catalysis depends on Asp131, which acts as the Proton donor.

This sequence belongs to the HisA/HisF family.

It is found in the cytoplasm. The catalysed reaction is 1-(5-phospho-beta-D-ribosyl)-5-[(5-phospho-beta-D-ribosylamino)methylideneamino]imidazole-4-carboxamide = 5-[(5-phospho-1-deoxy-D-ribulos-1-ylimino)methylamino]-1-(5-phospho-beta-D-ribosyl)imidazole-4-carboxamide. It participates in amino-acid biosynthesis; L-histidine biosynthesis; L-histidine from 5-phospho-alpha-D-ribose 1-diphosphate: step 4/9. In Burkholderia vietnamiensis (strain G4 / LMG 22486) (Burkholderia cepacia (strain R1808)), this protein is 1-(5-phosphoribosyl)-5-[(5-phosphoribosylamino)methylideneamino] imidazole-4-carboxamide isomerase.